A 291-amino-acid chain; its full sequence is MADLDDIKDGKDFHTDKPQTNTLFALKGCGALDWGMQSRLARIFNPKTRKTVMLAFDHGYFQGPTTGLERIDINIAPLFEYADVLMCTRGILRSVVPPAINKPVVLRASGANSILTELSNEAVAVAMDDAVRLNSCAAAAQVYIGSEHEHQSIKNIIQLIDAGLRVGMPIMAVTGVGKDMARDQRYFSLATRIAAEMGAQIIKTYYVDKGFERIAAGCPVPIVIAGGKKLPEREALEMCYQAIDQGASGVDMGRNIFQSEDPVAMIKAVHAVVHHNETAERAYELFLSEKS.

The active-site Schiff-base intermediate with substrate is lysine 203.

Belongs to the DeoC/FbaB aldolase family. As to quaternary structure, homodecamer.

It localises to the cytoplasm. The catalysed reaction is dihydroxyacetone phosphate + acetyl-CoA = 3-hydroxy-2,4-dioxopentyl phosphate + CoA. Functionally, involved in the degradation of phospho-AI-2, thereby terminating induction of the lsr operon and closing the AI-2 signaling cycle. Catalyzes the transfer of an acetyl moiety from 3-hydroxy-5-phosphonooxypentane-2,4-dione to CoA to form glycerone phosphate and acetyl-CoA. The polypeptide is 3-hydroxy-5-phosphonooxypentane-2,4-dione thiolase (Salmonella typhimurium (strain LT2 / SGSC1412 / ATCC 700720)).